The chain runs to 355 residues: MEYNAFFPPHEGLRLKDIADLFGAELSDDAAGERIIRSVAPVYRAKPDQLCYILSRKSGEELLTCEAGAVICDAALKSLIPSHIPALISKTPHTLFAQVGALLHPSAMRPSLVARMEAEISPAAYVDPSAKLEPGVIVEPMAVIGAGVHIGAGTRIGPGVVIGSDVQIGRDCTIAGGASILAALLGNNVIIHNGARIGQDGFGYAPGPRGMLKIVQIGRVIIQDHVEVGANTTIDRGTMDDTVIGEGTKIDNQVQIGHNVRIGRHCGIVSGVGIAGSTRIGDGVMIGGATGVNGHITIGDGVQIAAMSGVVSDVPAGTRYGGIPARPMKHFLRDMADILARAEERDKKTGEKNNG.

Catalysis depends on histidine 258, which acts as the Proton acceptor.

This sequence belongs to the transferase hexapeptide repeat family. LpxD subfamily. As to quaternary structure, homotrimer.

It carries out the reaction a UDP-3-O-[(3R)-3-hydroxyacyl]-alpha-D-glucosamine + a (3R)-hydroxyacyl-[ACP] = a UDP-2-N,3-O-bis[(3R)-3-hydroxyacyl]-alpha-D-glucosamine + holo-[ACP] + H(+). Its pathway is bacterial outer membrane biogenesis; LPS lipid A biosynthesis. In terms of biological role, catalyzes the N-acylation of UDP-3-O-acylglucosamine using 3-hydroxyacyl-ACP as the acyl donor. Is involved in the biosynthesis of lipid A, a phosphorylated glycolipid that anchors the lipopolysaccharide to the outer membrane of the cell. This chain is UDP-3-O-acylglucosamine N-acyltransferase, found in Agrobacterium fabrum (strain C58 / ATCC 33970) (Agrobacterium tumefaciens (strain C58)).